The primary structure comprises 20 residues: Non-specific lipid-transfer protein (20 aa).

It belongs to the plant LTP family.

Its function is as follows. Plant non-specific lipid-transfer proteins transfer phospholipids as well as galactolipids across membranes. May play a role in wax or cutin deposition in the cell walls of expanding epidermal cells and certain secretory tissues. The sequence is that of Non-specific lipid-transfer protein from Citrus limon (Lemon).